The primary structure comprises 159 residues: Cytochrome c-type biogenesis CcmH-like mitochondrial protein (159 aa).

The Mitochondrial intermembrane portion of the chain corresponds to 1–82 (MEKTDEERKK…ETVLYAPKFD (82 aa)). Heme is bound by residues Cys27 and Cys30. A helical transmembrane segment spans residues 83 to 105 (LQTAALWLTPVIIAGGTAAGIVY). Topologically, residues 106 to 159 (QKHRLRKNVDIMALNLIRGVPLTPKERVTILDVLIPPSPPPQGVVSRLRRWLNR) are mitochondrial matrix.

This sequence belongs to the CcmH/CycL/Ccl2/NrfF family. As to quaternary structure, interacts (via N-terminus) with CYTC-1. Interacts with CCMFN1 and CCMFN2.

The protein localises to the mitochondrion inner membrane. In terms of biological role, plays a central role in mitochondrial cytochrome c maturation. Probable component of a heme lyase complex involved in the reduction of apocytochrome c. Forms a complex with CCMF proteins (CCMFC, CCMFN1 and CCMFN2) that performs the assembly of heme with c-type apocytochromes in mitochondria. In Arabidopsis thaliana (Mouse-ear cress), this protein is Cytochrome c-type biogenesis CcmH-like mitochondrial protein.